A 287-amino-acid polypeptide reads, in one-letter code: MVLSNVKIFRLKSHRAFRIGPMIKAVAGNLLVKRFYQPKLERIPPASLLLKQKIRLAQNGSTTSTENPISFSQTMSEIFSVLQPSAPDLDEDKTSGLKRDHLLTERLNNGELGVIMNKFFNPSSTHNNQLIDTNILLQNFPKLSGNDLDLLDFAINEKMRGNWNDLKQDFIQLWYYKSFGFLGPRTQFVLTNSSPSLRSQFLKLPFTEYNWFLLQNNKNANILPADVQNVVKVFHLDDKRFTWKSIDPFSKAIISFVVFVSIYVWLDESAKQKTKELPAQKSTVISE.

Residues 1-24 constitute a mitochondrion transit peptide; it reads MVLSNVKIFRLKSHRAFRIGPMIK. Residues 250 to 266 traverse the membrane as a helical segment; the sequence is SKAIISFVVFVSIYVWL.

Belongs to the GEP7 family.

It is found in the mitochondrion membrane. In terms of biological role, involved in respiratory growth and required for cell survival in the absence of prohibitins or GEM1. The sequence is that of Genetic interactor of prohibitin 7, mitochondrial (GEP7) from Saccharomyces cerevisiae (strain YJM789) (Baker's yeast).